The following is a 458-amino-acid chain: ATP synthase subunit beta (458 aa).

148–155 lines the ATP pocket; the sequence is GGAGVGKT.

Belongs to the ATPase alpha/beta chains family. In terms of assembly, F-type ATPases have 2 components, CF(1) - the catalytic core - and CF(0) - the membrane proton channel. CF(1) has five subunits: alpha(3), beta(3), gamma(1), delta(1), epsilon(1). CF(0) has three main subunits: a(1), b(2) and c(9-12). The alpha and beta chains form an alternating ring which encloses part of the gamma chain. CF(1) is attached to CF(0) by a central stalk formed by the gamma and epsilon chains, while a peripheral stalk is formed by the delta and b chains.

Its subcellular location is the cell inner membrane. The catalysed reaction is ATP + H2O + 4 H(+)(in) = ADP + phosphate + 5 H(+)(out). Its function is as follows. Produces ATP from ADP in the presence of a proton gradient across the membrane. The catalytic sites are hosted primarily by the beta subunits. In Nitrosococcus oceani (strain ATCC 19707 / BCRC 17464 / JCM 30415 / NCIMB 11848 / C-107), this protein is ATP synthase subunit beta.